Consider the following 416-residue polypeptide: tRNA(Met) cytidine acetate ligase (416 aa).

Residues 7-20, Gly102, Asn166, and Arg191 contribute to the ATP site; that span reads VAEY…HLYL.

This sequence belongs to the TmcAL family.

Its subcellular location is the cytoplasm. The catalysed reaction is cytidine(34) in elongator tRNA(Met) + acetate + ATP = N(4)-acetylcytidine(34) in elongator tRNA(Met) + AMP + diphosphate. Catalyzes the formation of N(4)-acetylcytidine (ac(4)C) at the wobble position of elongator tRNA(Met), using acetate and ATP as substrates. First activates an acetate ion to form acetyladenylate (Ac-AMP) and then transfers the acetyl group to tRNA to form ac(4)C34. This Syntrophomonas wolfei subsp. wolfei (strain DSM 2245B / Goettingen) protein is tRNA(Met) cytidine acetate ligase.